We begin with the raw amino-acid sequence, 615 residues long: Isocitrate dehydrogenase kinase/phosphatase (615 aa).

Residues 325-331 and lysine 346 each bind ATP; that span reads APGIKGM. The active site involves aspartate 381.

Belongs to the AceK family.

It is found in the cytoplasm. The enzyme catalyses L-seryl-[isocitrate dehydrogenase] + ATP = O-phospho-L-seryl-[isocitrate dehydrogenase] + ADP + H(+). Bifunctional enzyme which can phosphorylate or dephosphorylate isocitrate dehydrogenase (IDH) on a specific serine residue. This is a regulatory mechanism which enables bacteria to bypass the Krebs cycle via the glyoxylate shunt in response to the source of carbon. When bacteria are grown on glucose, IDH is fully active and unphosphorylated, but when grown on acetate or ethanol, the activity of IDH declines drastically concomitant with its phosphorylation. In Albidiferax ferrireducens (strain ATCC BAA-621 / DSM 15236 / T118) (Rhodoferax ferrireducens), this protein is Isocitrate dehydrogenase kinase/phosphatase.